A 424-amino-acid chain; its full sequence is Serine--tRNA ligase (424 aa).

231–233 (TAE) is an L-serine binding site. 262 to 264 (RSE) contributes to the ATP binding site. Position 285 (E285) interacts with L-serine. An ATP-binding site is contributed by 349 to 352 (EISS). Position 385 (S385) interacts with L-serine.

The protein belongs to the class-II aminoacyl-tRNA synthetase family. Type-1 seryl-tRNA synthetase subfamily. In terms of assembly, homodimer. The tRNA molecule binds across the dimer.

The protein localises to the cytoplasm. The enzyme catalyses tRNA(Ser) + L-serine + ATP = L-seryl-tRNA(Ser) + AMP + diphosphate + H(+). It carries out the reaction tRNA(Sec) + L-serine + ATP = L-seryl-tRNA(Sec) + AMP + diphosphate + H(+). It functions in the pathway aminoacyl-tRNA biosynthesis; selenocysteinyl-tRNA(Sec) biosynthesis; L-seryl-tRNA(Sec) from L-serine and tRNA(Sec): step 1/1. In terms of biological role, catalyzes the attachment of serine to tRNA(Ser). Is also able to aminoacylate tRNA(Sec) with serine, to form the misacylated tRNA L-seryl-tRNA(Sec), which will be further converted into selenocysteinyl-tRNA(Sec). In Bacillus pumilus (strain SAFR-032), this protein is Serine--tRNA ligase.